A 209-amino-acid chain; its full sequence is MAAHLEEQQELDNFKYFWKTTGKWLFALLILAALGYLGYTVYQNRAASQNQEAAAVLANIVEKAQNKAPQSEINAELSKLQQSYPHSISAAQATLMAAATEFDAQRYDVAEGHLKWVLSNQKDSLIQALAAQRLGVVLLQQKKYDAALAALDTPVEADFAPLLMETKGDVYAAQEKSQEALKNYGQALEKMPQDSVGRELLQMKLDSLK.

The Cytoplasmic segment spans residues 1–23; that stretch reads MAAHLEEQQELDNFKYFWKTTGK. A helical membrane pass occupies residues 24–42; the sequence is WLFALLILAALGYLGYTVY. The Periplasmic portion of the chain corresponds to 43-209; sequence QNRAASQNQE…LLQMKLDSLK (167 aa). The stretch at 161–194 is one TPR repeat; the sequence is PLLMETKGDVYAAQEKSQEALKNYGQALEKMPQD.

Belongs to the YfgM family. Interacts with the SecYEG translocon. Forms a complex with PpiD.

It is found in the cell inner membrane. Functionally, may mediate protein transfer from the SecYEG translocon to the periplasmic chaperone network via its periplasmic C-terminal region. This is Ancillary SecYEG translocon subunit from Neisseria gonorrhoeae (strain ATCC 700825 / FA 1090).